The following is a 99-amino-acid chain: Acylphosphatase (99 aa).

The Acylphosphatase-like domain occupies 14–99 (AVDVTVTGRV…DQGLRSFGVR (86 aa)). Catalysis depends on residues arginine 29 and asparagine 47.

It belongs to the acylphosphatase family.

The enzyme catalyses an acyl phosphate + H2O = a carboxylate + phosphate + H(+). The sequence is that of Acylphosphatase (acyP) from Nocardioides sp. (strain ATCC BAA-499 / JS614).